The chain runs to 769 residues: Probable protease Ga0334635_1659 (769 aa).

The disordered stretch occupies residues 118–167; sequence VARGSSDNNGAPPLSFTLSHGDPKSDPEPSSPSRLVNTGLSEAERPESPL.

In terms of biological role, probably a dedicated protease for substrate gasdermin bGSDM; cleaves the bGSDM precursor, releasing the pore-forming moiety, which integrates into the membrane and triggers cell death. Involved in defense against bacteriophages. Expression of gasdermin bGSDM and this neighboring protease is toxic in E.coli. The polypeptide is Probable protease Ga0334635_1659 (Vitiosangium sp. (strain GDMCC 1.1324)).